Reading from the N-terminus, the 510-residue chain is Solute carrier family 2, facilitated glucose transporter member 2 (510 aa).

Over 1 to 10 (MTEDKVTGTL) the chain is Cytoplasmic. A helical membrane pass occupies residues 11–31 (VLAVFTAVLSSFQFGYDIGVI). Over 32-96 (NAPQQVIITH…SASLITMFWS (65 aa)) the chain is Extracellular. Asn62 carries N-linked (GlcNAc...) asparagine glycosylation. Residues 97 to 117 (LSVSSFAVGGMIASFFGGLLG) traverse the membrane as a helical segment. Over 118–122 (DKLGR) the chain is Cytoplasmic. A helical membrane pass occupies residues 123–143 (IKALLVANILSLVGALLMGFS). Residues 144–157 (KLGPSHILIISGRG) are Extracellular-facing. A helical transmembrane segment spans residues 158–178 (ISGLYCGLISGLIPMYIGEIA). Residues 179-191 (PTTLRGAIGALHQ) lie on the Cytoplasmic side of the membrane. Gln191 is a D-glucose binding site. The helical transmembrane segment at 192-212 (LAIVTGILISQIVGLDFILGN) threads the bilayer. Topologically, residues 213-215 (HEL) are extracellular. A helical transmembrane segment spans residues 216-236 (WHILLGLSAVPAILQCLLLFF). The Cytoplasmic portion of the chain corresponds to 237–301 (CPESPRYLYI…LFTNASYRQP (65 aa)). The chain crosses the membrane as a helical span at residues 302-322 (ILVALMLHAAQQFSGINGIFY). Residues 312–313 (QQ) and Asn318 each bind D-glucose. At 323-336 (YSTSIFQTAGISQP) the chain is on the extracellular side. The chain crosses the membrane as a helical span at residues 337–357 (VYATIGVGAVNTVFTAVSVFL). A D-glucose-binding site is contributed by Asn347. Over 358-365 (VEKAGRRS) the chain is Cytoplasmic. Residues 366–386 (LFLIGMSGMFVCAIFMSVGLV) form a helical membrane-spanning segment. At 387-400 (LLSKFPWMNYVSMT) the chain is on the extracellular side. A helical transmembrane segment spans residues 401–421 (AIFLFVSFFEIGPGPIPWFMV). D-glucose is bound by residues Glu410 and Trp418. The Cytoplasmic portion of the chain corresponds to 422–431 (AEFFSQGPRP). The chain crosses the membrane as a helical span at residues 432 to 452 (AALAIAAFSNWTGNFIIALCF). The Extracellular portion of the chain corresponds to 453-454 (QY). Residues 455-475 (IADFCGPYVFFLLLVWSWPLF) traverse the membrane as a helical segment. At 476–510 (CSHFLKFQKPKENPLRKSQQSSERRGVQLKRQKLL) the chain is on the cytoplasmic side. The interval 490-510 (LRKSQQSSERRGVQLKRQKLL) is disordered.

It belongs to the major facilitator superfamily. Sugar transporter (TC 2.A.1.1) family. Glucose transporter subfamily. Post-translationally, N-glycosylated; required for stability and retention at the cell surface of pancreatic beta cells.

The protein localises to the cell membrane. It carries out the reaction D-glucose(out) = D-glucose(in). It catalyses the reaction D-fructose(out) = D-fructose(in). The enzyme catalyses L-dehydroascorbate(out) = L-dehydroascorbate(in). The catalysed reaction is D-galactose(in) = D-galactose(out). D-glucose and maltose competitively inhibit fructose transport. D-glucose, D-fructose and maltose inhibit deoxyglucose transport. Functionally, facilitative hexose transporter that mediates the transport of glucose, fructose and galactose. Likely mediates the bidirectional transfer of glucose across the plasma membrane of hepatocytes and is responsible for uptake of glucose by the beta cells; may comprise part of the glucose-sensing mechanism of the beta cell. May also participate with the Na(+)/glucose cotransporter in the transcellular transport of glucose in the small intestine and kidney. Also able to mediate the transport of dehydroascorbate. The sequence is that of Solute carrier family 2, facilitated glucose transporter member 2 from Bos taurus (Bovine).